A 177-amino-acid polypeptide reads, in one-letter code: Cell division inhibitor SulA (177 aa).

The interval 112–118 (ALASGNY) is ftsZ binding. The tract at residues 170–177 (KIHSIHYH) is lon protease binding.

This sequence belongs to the SulA family. Interacts with FtsZ. In terms of processing, is rapidly cleaved and degraded by the Lon protease once DNA damage is repaired.

In terms of biological role, component of the SOS system and an inhibitor of cell division. Accumulation of SulA causes rapid cessation of cell division and the appearance of long, non-septate filaments. In the presence of GTP, binds a polymerization-competent form of FtsZ in a 1:1 ratio, thus inhibiting FtsZ polymerization and therefore preventing it from participating in the assembly of the Z ring. This mechanism prevents the premature segregation of damaged DNA to daughter cells during cell division. The sequence is that of Cell division inhibitor SulA from Photorhabdus laumondii subsp. laumondii (strain DSM 15139 / CIP 105565 / TT01) (Photorhabdus luminescens subsp. laumondii).